The following is a 616-amino-acid chain: Homeodomain-interacting protein kinase 4 (616 aa).

A Protein kinase domain is found at 11–347; the sequence is YDIIEVLGKG…PSAALRHPFV (337 aa). ATP is bound by residues 17-25 and K40; that span reads LGKGTFGEV. D136 serves as the catalytic Proton acceptor. The tract at residues 486–616 is disordered; that stretch reads HKARKPPAGS…SFLQHVTGHH (131 aa). The span at 496–511 shows a compositional bias: polar residues; it reads KSDSNFSNLIRLSQVS. S511 is modified (phosphoserine).

Belongs to the protein kinase superfamily. CMGC Ser/Thr protein kinase family. HIPK subfamily. In terms of processing, autophosphorylated.

The protein resides in the cytoplasm. It carries out the reaction L-seryl-[protein] + ATP = O-phospho-L-seryl-[protein] + ADP + H(+). The enzyme catalyses L-threonyl-[protein] + ATP = O-phospho-L-threonyl-[protein] + ADP + H(+). Its function is as follows. Protein kinase that phosphorylates human TP53 at Ser-9, and thus induces TP53 repression of BIRC5 promoter. May act as a corepressor of transcription factors (Potential). This Homo sapiens (Human) protein is Homeodomain-interacting protein kinase 4 (HIPK4).